We begin with the raw amino-acid sequence, 433 residues long: Eukaryotic peptide chain release factor subunit 1 (433 aa).

Residue Gln-182 is modified to N5-methylglutamine. Residue Ser-425 is modified to Phosphoserine.

This sequence belongs to the eukaryotic release factor 1 family. In terms of assembly, component of the eRF1-eRF3-GTP ternary complex, composed of sup45/eRF1, sup35/eRF3 and GTP.

The protein resides in the cytoplasm. Component of the eRF1-eRF3-GTP ternary complex, a ternary complex that mediates translation termination in response to the termination codons. The eRF1-eRF3-GTP complex binds to a stop codon in the ribosomal A-site. Sup45/eRF1 is responsible for stop codon recognition and inducing hydrolysis of peptidyl-tRNA. Following GTP hydrolysis by sup35/eRF3, sup35/eRF3 dissociates, permitting sup45/eRF1 to accommodate fully in the A-site. The chain is Eukaryotic peptide chain release factor subunit 1 (sup45) from Schizosaccharomyces pombe (strain 972 / ATCC 24843) (Fission yeast).